The sequence spans 414 residues: Argininosuccinate synthase (414 aa).

12–20 (AYSGGLDTS) provides a ligand contact to ATP. The L-citrulline site is built by Tyr90 and Ser95. ATP is bound at residue Gly120. 3 residues coordinate L-aspartate: Thr122, Asn126, and Asp127. Residue Asn126 coordinates L-citrulline. Residues Arg130, Ser179, Ser188, Glu264, and Tyr276 each contribute to the L-citrulline site.

This sequence belongs to the argininosuccinate synthase family. Type 1 subfamily. As to quaternary structure, homotetramer.

The protein localises to the cytoplasm. It carries out the reaction L-citrulline + L-aspartate + ATP = 2-(N(omega)-L-arginino)succinate + AMP + diphosphate + H(+). It functions in the pathway amino-acid biosynthesis; L-arginine biosynthesis; L-arginine from L-ornithine and carbamoyl phosphate: step 2/3. The polypeptide is Argininosuccinate synthase (Alkaliphilus metalliredigens (strain QYMF)).